The chain runs to 577 residues: Cleavage stimulation factor subunit 2 (577 aa).

Position 14 is a phosphoserine (Ser-14). The RRM domain maps to 16–94 (RSVFVGNIPY…RALRVDNAAS (79 aa)). The interactions with CSTF3 and SYMPK stretch occupies residues 108–248 (APVIESPYGE…VNGAPPLMQA (141 aa)). Lys-189 is covalently cross-linked (Glycyl lysine isopeptide (Lys-Gly) (interchain with G-Cter in SUMO2)). The segment at 206-243 (QPVHGAGPGSGSNVSMNQQNPQAPQAQSLGGMHVNGAP) is disordered. Positions 222–232 (NQQNPQAPQAQ) are enriched in low complexity. The residue at position 308 (Arg-308) is an Omega-N-methylarginine. The disordered stretch occupies residues 340–409 (EVEPRGYLGP…DGRGGRDPRG (70 aa)). Residues 360–373 (PGHESRGPPPHELR) show a composition bias toward basic and acidic residues. The 1; approximate repeat unit spans residues 410 to 414 (IDARG). Residues 410 to 469 (IDARGMEARAMEARGLDARGLEARAMEARAMEARAMEARAMEARAMEVRGMEARGMDTRG) are 12 X 5 AA tandem repeats of M-E-A-R-[AG]. A run of 2 repeats spans residues 415 to 419 (MEARA) and 420 to 424 (MEARG). The stretch at 425–429 (LDARG) is one 4; approximate repeat. The stretch at 430–434 (LEARA) is one 5; approximate repeat. 4 repeat units span residues 435 to 439 (MEARA), 440 to 444 (MEARA), 445 to 449 (MEARA), and 450 to 454 (MEARA). A 10; approximate repeat occupies 455–459 (MEVRG). The stretch at 460–464 (MEARG) is repeat 11. One copy of the 12; approximate repeat lies at 465–469 (MDTRG). Omega-N-methylarginine occurs at positions 468 and 475. The disordered stretch occupies residues 508 to 532 (GMQGASIQGGSQPGGFSPGQNQVTP). The tract at residues 514-577 (IQGGSQPGGF…EQIQKSTGAP (64 aa)) is interaction with RPO2TC1. A phosphoserine mark is found at Ser-518 and Ser-524.

The CSTF complex is composed of CSTF1 (50 kDa subunit), CSTF2 (64 kDa subunit) and CSTF3 (77 kDa subunit). CSTF2 directly interacts with CSTF3, SYMPK and RPO2TC1. Interacts with HSF1 in heat-stressed cells. Interacts with CPSF2, CPSF3 and FIP1L1. Interacts with DDX1.

The protein resides in the nucleus. Functionally, one of the multiple factors required for polyadenylation and 3'-end cleavage of mammalian pre-mRNAs. This subunit is directly involved in the binding to pre-mRNAs. This chain is Cleavage stimulation factor subunit 2 (CSTF2), found in Homo sapiens (Human).